A 593-amino-acid chain; its full sequence is Progranulin (593 aa).

An N-terminal signal peptide occupies residues 1-17 (MWTLVSWVALTAGLVAG). A glycan (N-linked (GlcNAc...) asparagine) is linked at N118. 2 cysteine pairs are disulfide-bonded: C126-C139 and C133-C149. N-linked (GlcNAc...) asparagine glycosylation is found at N236 and N265. 10 cysteine pairs are disulfide-bonded: C284–C296, C290–C306, C297–C314, C307–C321, C315–C328, C322–C335, C366–C378, C372–C388, C397–C410, and C404–C416. An N-linked (GlcNAc...) asparagine glycan is attached at N368. N530 carries an N-linked (GlcNAc...) asparagine glycan.

The protein belongs to the granulin family. Progranulin is secreted as a homodimer. Interacts with SLPI; interaction protects progranulin from proteolysis. Interacts (via region corresponding to granulin-7 peptide) with CTSD; stabilizes CTSD and increases its proteolytic activity. Interacts (via region corresponding to granulin-7 peptide) with SORT1; this interaction mediates endocytosis and lysosome delivery of progranulin; interaction occurs at the neuronal cell surface in a stressed nervous system. Interacts with PSAP; facilitates lysosomal delivery of progranulin from the extracellular space and the biosynthetic pathway. Forms a complex with PSAP and M6PR; PSAP bridges the binding between progranulin and M6PR. Forms a complex with PSAP and SORT1; progranulin bridges the interaction between PSAP and SORT1; facilitates lysosomal targeting of PSAP via SORT1; interaction enhances PSAP uptake in primary cortical neurons. Interacts (via regions corresponding to granulin-2 and granulin-7 peptides) with GBA1; this interaction prevents aggregation of GBA1-SCARB2 complex via interaction with HSPA1A upon stress. Interacts (via region corresponding to granulin-7 peptide) with HSPA1A; mediates recruitment of HSPA1A to GBA1 and prevents GBA1 aggregation in response to stress. Cleaved by ELANE; proteolysis is blocked by SLPI and is concentration- and time-dependent and induces CXCL8/IL-8 production; granulin-3 and granulin-4 are resistant to ELANE. Cleaved by CTSL in lysosome thus regulating the maturation and turnover of progranulin within the lysosome. In terms of tissue distribution, in myelogenous leukemic cell lines of promonocytic, promyelocytic, and proerythroid lineage, in fibroblasts, and very strongly in epithelial cell lines. Present in inflammatory cells and bone marrow. Highest levels in kidney.

The protein resides in the secreted. It is found in the lysosome. In terms of biological role, secreted protein that acts as a key regulator of lysosomal function and as a growth factor involved in inflammation, wound healing and cell proliferation. Regulates protein trafficking to lysosomes, and also the activity of lysosomal enzymes. Also facilitates the acidification of lysosomes, causing degradation of mature CTSD by CTSB. In addition, functions as a wound-related growth factor that acts directly on dermal fibroblasts and endothelial cells to promote division, migration and the formation of capillary-like tubule structures. Also promotes epithelial cell proliferation by blocking TNF-mediated neutrophil activation preventing release of oxidants and proteases. Moreover, modulates inflammation in neurons by preserving neurons survival, axonal outgrowth and neuronal integrity. Promotes proliferation of the epithelial cell line A431 in culture. Its function is as follows. Inhibits epithelial cell proliferation and induces epithelial cells to secrete IL-8. Functionally, stabilizes CTSD through interaction with CTSD leading to maintain its aspartic-type peptidase activity. The sequence is that of Progranulin from Homo sapiens (Human).